Consider the following 171-residue polypeptide: Protein TIFY 11d (171 aa).

The Tify domain occupies 65–100 (PSAGTAPLTIFYDGRMVVVDDVPVEKAAELMRLAGS). A Jas motif is present at residues 117–142 (PIARKASLQRFLQKRKHRITTTSEPY). The Nuclear localization signal signature appears at 119-126 (ARKASLQR).

The protein belongs to the TIFY/JAZ family. Interacts with BHLH148 and COI1A. Interacts with COI1A, COI1B and COI2 in a coronatine-dependent manner. Coronatine is an analog of jasmonoyl isoleucine (JA-Ile). Post-translationally, ubiquitinated. Increase in jasmonoyl isoleucine (JA-Ile) levels mediates its degradation via COI1A-mediated proteasome pathway.

Its subcellular location is the nucleus. In terms of biological role, repressor of jasmonate (JA) responses. May act on an initial response of JA-regulated gene expression toward drought tolerance as part of a BHLH148-TIFY11D/JAZ12-COI1A complex. In Oryza sativa subsp. japonica (Rice), this protein is Protein TIFY 11d.